The primary structure comprises 259 residues: Pyridoxine 5'-phosphate synthase (259 aa).

A 3-amino-2-oxopropyl phosphate-binding site is contributed by asparagine 6. 8–9 (DH) contributes to the 1-deoxy-D-xylulose 5-phosphate binding site. A 3-amino-2-oxopropyl phosphate-binding site is contributed by arginine 17. Residue histidine 42 is the Proton acceptor of the active site. 1-deoxy-D-xylulose 5-phosphate-binding residues include arginine 44 and histidine 49. Glutamate 69 functions as the Proton acceptor in the catalytic mechanism. Residue threonine 99 participates in 1-deoxy-D-xylulose 5-phosphate binding. The active-site Proton donor is the histidine 212. 3-amino-2-oxopropyl phosphate-binding positions include glycine 213 and 234–235 (GH).

It belongs to the PNP synthase family. Homooctamer; tetramer of dimers.

Its subcellular location is the cytoplasm. The catalysed reaction is 3-amino-2-oxopropyl phosphate + 1-deoxy-D-xylulose 5-phosphate = pyridoxine 5'-phosphate + phosphate + 2 H2O + H(+). Its pathway is cofactor biosynthesis; pyridoxine 5'-phosphate biosynthesis; pyridoxine 5'-phosphate from D-erythrose 4-phosphate: step 5/5. Catalyzes the complicated ring closure reaction between the two acyclic compounds 1-deoxy-D-xylulose-5-phosphate (DXP) and 3-amino-2-oxopropyl phosphate (1-amino-acetone-3-phosphate or AAP) to form pyridoxine 5'-phosphate (PNP) and inorganic phosphate. In Nautilia profundicola (strain ATCC BAA-1463 / DSM 18972 / AmH), this protein is Pyridoxine 5'-phosphate synthase.